The primary structure comprises 423 residues: Histidine--tRNA ligase (423 aa).

It belongs to the class-II aminoacyl-tRNA synthetase family. In terms of assembly, homodimer.

Its subcellular location is the cytoplasm. The catalysed reaction is tRNA(His) + L-histidine + ATP = L-histidyl-tRNA(His) + AMP + diphosphate + H(+). This Orientia tsutsugamushi (strain Boryong) (Rickettsia tsutsugamushi) protein is Histidine--tRNA ligase.